A 374-amino-acid polypeptide reads, in one-letter code: tRNA (guanine(26)-N(2))-dimethyltransferase (374 aa).

Residues 1–367 (MILKEGEVVF…ATLKNVIEAI (367 aa)) enclose the Trm1 methyltransferase domain. 5 residues coordinate S-adenosyl-L-methionine: arginine 34, arginine 66, aspartate 86, aspartate 113, and alanine 114.

It belongs to the class I-like SAM-binding methyltransferase superfamily. Trm1 family.

The catalysed reaction is guanosine(26) in tRNA + 2 S-adenosyl-L-methionine = N(2)-dimethylguanosine(26) in tRNA + 2 S-adenosyl-L-homocysteine + 2 H(+). In terms of biological role, dimethylates a single guanine residue at position 26 of a number of tRNAs using S-adenosyl-L-methionine as donor of the methyl groups. This chain is tRNA (guanine(26)-N(2))-dimethyltransferase, found in Methanocaldococcus jannaschii (strain ATCC 43067 / DSM 2661 / JAL-1 / JCM 10045 / NBRC 100440) (Methanococcus jannaschii).